Here is a 321-residue protein sequence, read N- to C-terminus: Tetraacyldisaccharide 4'-kinase (321 aa).

Residue 54–61 (SVGGTGKT) participates in ATP binding.

This sequence belongs to the LpxK family.

It catalyses the reaction a lipid A disaccharide + ATP = a lipid IVA + ADP + H(+). It functions in the pathway glycolipid biosynthesis; lipid IV(A) biosynthesis; lipid IV(A) from (3R)-3-hydroxytetradecanoyl-[acyl-carrier-protein] and UDP-N-acetyl-alpha-D-glucosamine: step 6/6. Transfers the gamma-phosphate of ATP to the 4'-position of a tetraacyldisaccharide 1-phosphate intermediate (termed DS-1-P) to form tetraacyldisaccharide 1,4'-bis-phosphate (lipid IVA). The protein is Tetraacyldisaccharide 4'-kinase of Rickettsia conorii (strain ATCC VR-613 / Malish 7).